The sequence spans 435 residues: E3 ubiquitin-protein ligase PUB22 (435 aa).

The U-box domain occupies 6 to 81; the sequence is EIPSFFLCPI…QSWCTLNASY (76 aa).

In terms of assembly, interacts with RPN12A. Binds to EXO70B2. Auto-ubiquitinated leading to degradation via the 26S proteasome. This Auto-ubiquitination is repressed by the bacterial elicitor flg22 thus leading to a transiently increased protein stabilization and accumulation.

The protein localises to the cytoplasm. It catalyses the reaction S-ubiquitinyl-[E2 ubiquitin-conjugating enzyme]-L-cysteine + [acceptor protein]-L-lysine = [E2 ubiquitin-conjugating enzyme]-L-cysteine + N(6)-ubiquitinyl-[acceptor protein]-L-lysine.. Its pathway is protein modification; protein ubiquitination. Its function is as follows. E3 ubiquitin-protein ligase that negatively regulates water stress response. May control in coordination with PUB23 a drought signaling pathway by ubiquitinating cytosolic RPN12a. Acts as a negative regulator of the immunity triggered by the pathogen-associated molecular patterns (PAMPs), in association with PUB23 and PUB24. Regulates EXO70B2 ubiquitination and degradation via the 26S proteasome to attenuate PAMP-induced signaling. The polypeptide is E3 ubiquitin-protein ligase PUB22 (Arabidopsis thaliana (Mouse-ear cress)).